The following is a 67-amino-acid chain: UPF0435 protein SSP0913 (67 aa).

It belongs to the UPF0435 family.

This is UPF0435 protein SSP0913 from Staphylococcus saprophyticus subsp. saprophyticus (strain ATCC 15305 / DSM 20229 / NCIMB 8711 / NCTC 7292 / S-41).